Consider the following 505-residue polypeptide: ATP synthase subunit alpha (505 aa).

172 to 179 (GDRQIGKT) is a binding site for ATP.

The protein belongs to the ATPase alpha/beta chains family. As to quaternary structure, F-type ATPases have 2 components, CF(1) - the catalytic core - and CF(0) - the membrane proton channel. CF(1) has five subunits: alpha(3), beta(3), gamma(1), delta(1), epsilon(1). CF(0) has three main subunits: a(1), b(2) and c(9-12). The alpha and beta chains form an alternating ring which encloses part of the gamma chain. CF(1) is attached to CF(0) by a central stalk formed by the gamma and epsilon chains, while a peripheral stalk is formed by the delta and b chains.

Its subcellular location is the cell inner membrane. It carries out the reaction ATP + H2O + 4 H(+)(in) = ADP + phosphate + 5 H(+)(out). Produces ATP from ADP in the presence of a proton gradient across the membrane. The alpha chain is a regulatory subunit. In Syntrophobacter fumaroxidans (strain DSM 10017 / MPOB), this protein is ATP synthase subunit alpha.